Consider the following 390-residue polypeptide: Neutrophil cytosol factor 1 (390 aa).

In terms of domain architecture, PX spans Thr4 to Leu125. SH3 domains are found at residues Ile156–Ser215 and Tyr226–Glu285. A disordered region spans residues Gln291–Val390. Ser304, Ser321, Ser329, and Ser346 each carry phosphoserine. The segment covering Ile374–Lys383 has biased composition (basic and acidic residues).

In terms of assembly, component of the phagocyte NADPH oxidase complex composed of an obligatory core heterodimer formed by the membrane proteins CYBA and CYBB and the cytosolic regulatory subunits NCF1/p47-phox, NCF2/p67-phox, NCF4/p40-phox and the small GTPase RAC1 or RAC2. Part of a cytosolic complex composed at least by NCF1, NCF2 and NCF4. Interacts (via C-terminus) with NCF2 (via the C-terminal SH3 domain). Interacts with NCF4. Interacts with CYBB. Interacts (via the second SH3 domain) with CYBA; interaction is phosphorylation-dependent. Interacts with NOXA1. Interacts with ADAM15. Interacts with TRAF4. Interacts with FASLG. Interacts with PARK7 (via C-terminus); the interaction is enhanced by LPS and modulates NCF1 phosphorylation and membrane translocation. Phosphorylated by PRKCD; phosphorylation induces activation of NCF1, leading to assembly and activation of the NADPH oxidase complex.

The protein localises to the cytoplasm. Its subcellular location is the cytosol. It is found in the membrane. Subunit of the phagocyte NADPH oxidase complex that mediates the transfer of electrons from cytosolic NADPH to O2 to produce the superoxide anion (O2(-)). In the activated complex, electrons are first transferred from NADPH to flavin adenine dinucleotide (FAD) and subsequently transferred via two heme molecules to molecular oxygen, producing superoxide through an outer-sphere reaction. Activation of the NADPH oxidase complex is initiated by the assembly of cytosolic subunits of the NADPH oxidase complex with the core NADPH oxidase complex to form a complex at the plasma membrane or phagosomal membrane. This activation process is initiated by phosphorylation dependent binding of the cytosolic NCF1/p47-phox subunit to the C-terminus of CYBA/p22-phox. In Mus musculus (Mouse), this protein is Neutrophil cytosol factor 1.